The sequence spans 106 residues: MFSILKQGVISKSLLAATSLKATASRFSFSTSVASRVDGTKNGWSFTASNVADQTTDIGINSESAMSCNDQEQPLSFYVQTVRDDLNSPNWGAEQRKGAFDWEVSA.

It is found in the mitochondrion. Functionally, stress-responsive protein that may play a role in regulation of cell cycle. In Schizosaccharomyces pombe (strain 972 / ATCC 24843) (Fission yeast), this protein is Stress-responsive protein 1 (sro1).